The sequence spans 115 residues: Large ribosomal subunit protein bL19 (115 aa).

It belongs to the bacterial ribosomal protein bL19 family.

This protein is located at the 30S-50S ribosomal subunit interface and may play a role in the structure and function of the aminoacyl-tRNA binding site. The protein is Large ribosomal subunit protein bL19 of Brevibacillus brevis (strain 47 / JCM 6285 / NBRC 100599).